Reading from the N-terminus, the 397-residue chain is Phosphoglycerate kinase (397 aa).

Residues Asp21–Asn23, Arg36, His59–Arg62, Arg119, and Arg156 contribute to the substrate site. ATP is bound by residues Lys207, Gly295, Glu326, and Gly353–Ser356.

This sequence belongs to the phosphoglycerate kinase family. As to quaternary structure, monomer.

Its subcellular location is the cytoplasm. It catalyses the reaction (2R)-3-phosphoglycerate + ATP = (2R)-3-phospho-glyceroyl phosphate + ADP. Its pathway is carbohydrate degradation; glycolysis; pyruvate from D-glyceraldehyde 3-phosphate: step 2/5. In Enterococcus faecalis (strain ATCC 700802 / V583), this protein is Phosphoglycerate kinase.